A 575-amino-acid chain; its full sequence is Pre-hexon-linking protein IIIa (575 aa).

A peripentonal hexon-tethering domain region spans residues 1–95; it reads MTSSDTFLAL…DLLNRAYTWN (95 aa). A binding to hexon-linking protein region spans residues 129 to 243; sequence ANASLLTQFF…FYDYGAMEPG (115 aa). Residue Ser-497 is modified to Phosphoserine; by host. A propeptide spanning residues 515–575 is cleaved from the precursor; the sequence is GGPGFFASLR…SRRGRKLRFY (61 aa). Residues 525–549 are disordered; sequence PSIGSRQPTGTAVGLRPTTPYSGSG.

It belongs to the adenoviridae hexon-linking protein IIIa family. As to quaternary structure, interacts with hexon proteins; this interaction tethers the peripentonal hexons to hexons situated in the facet. Interacts with the penton protein (via N-terminus). Interacts with packaging protein 3; this interaction is required to promote correct genome packaging. In terms of processing, cleaved near the C-terminus by the viral protease during virion maturation to form the mature protein.

It is found in the virion. It localises to the host nucleus. Its function is as follows. Structural component of the virion that acts as a cement protein on the capsid exterior which mediates the interactions between the hexons, including the peripentonal hexons, and reaches all the way to the penton vertices. Two hexon linking proteins IIIa, one from each facet, stabilize the unique edge interface between a pair of facets. As the virus enters the host cell, hexon linking proteins IIIa are shed concomitant with virion acidification in the endosome. During virus assembly, seems to play a role in the serotype specificity of the packaging of viral DNA via its interaction with packaging protein 3. The chain is Pre-hexon-linking protein IIIa from Galliformes (FAdV-1).